Consider the following 678-residue polypeptide: DNA ligase (678 aa).

Residues 35–39 (DSVYD), 84–85 (SL), and E116 contribute to the NAD(+) site. K118 acts as the N6-AMP-lysine intermediate in catalysis. R139, E178, K297, and K321 together coordinate NAD(+). Residues C415, C418, C433, and C438 each contribute to the Zn(2+) site. Residues 600 to 678 (DGNQIFAGKT…EAQLLEMLNE (79 aa)) enclose the BRCT domain.

It belongs to the NAD-dependent DNA ligase family. LigA subfamily. Mg(2+) serves as cofactor. Mn(2+) is required as a cofactor.

It catalyses the reaction NAD(+) + (deoxyribonucleotide)n-3'-hydroxyl + 5'-phospho-(deoxyribonucleotide)m = (deoxyribonucleotide)n+m + AMP + beta-nicotinamide D-nucleotide.. In terms of biological role, DNA ligase that catalyzes the formation of phosphodiester linkages between 5'-phosphoryl and 3'-hydroxyl groups in double-stranded DNA using NAD as a coenzyme and as the energy source for the reaction. It is essential for DNA replication and repair of damaged DNA. The sequence is that of DNA ligase from Nostoc punctiforme (strain ATCC 29133 / PCC 73102).